Here is a 291-residue protein sequence, read N- to C-terminus: Pyridoxal 5'-phosphate synthase subunit PdxS (291 aa).

A D-ribose 5-phosphate-binding site is contributed by Asp23. The active-site Schiff-base intermediate with D-ribose 5-phosphate is Lys80. Gly152 contacts D-ribose 5-phosphate. Arg164 lines the D-glyceraldehyde 3-phosphate pocket. D-ribose 5-phosphate-binding positions include Gly213 and 234-235 (GS).

This sequence belongs to the PdxS/SNZ family. In terms of assembly, in the presence of PdxT, forms a dodecamer of heterodimers.

It carries out the reaction aldehydo-D-ribose 5-phosphate + D-glyceraldehyde 3-phosphate + L-glutamine = pyridoxal 5'-phosphate + L-glutamate + phosphate + 3 H2O + H(+). It participates in cofactor biosynthesis; pyridoxal 5'-phosphate biosynthesis. Functionally, catalyzes the formation of pyridoxal 5'-phosphate from ribose 5-phosphate (RBP), glyceraldehyde 3-phosphate (G3P) and ammonia. The ammonia is provided by the PdxT subunit. Can also use ribulose 5-phosphate and dihydroxyacetone phosphate as substrates, resulting from enzyme-catalyzed isomerization of RBP and G3P, respectively. The polypeptide is Pyridoxal 5'-phosphate synthase subunit PdxS (Bifidobacterium longum (strain NCC 2705)).